A 125-amino-acid polypeptide reads, in one-letter code: Small ribosomal subunit protein bS6 (125 aa).

The segment at 97 to 125 is disordered; it reads TEASPMKAAKEERKPLAEVENNDFEDAEE. Positions 104–113 are enriched in basic and acidic residues; the sequence is AAKEERKPLA. Acidic residues predominate over residues 116–125; that stretch reads ENNDFEDAEE.

This sequence belongs to the bacterial ribosomal protein bS6 family.

In terms of biological role, binds together with bS18 to 16S ribosomal RNA. The protein is Small ribosomal subunit protein bS6 of Haemophilus influenzae (strain PittEE).